The sequence spans 129 residues: Mediator of RNA polymerase II transcription subunit 31-B (129 aa).

The protein belongs to the Mediator complex subunit 31 family. In terms of assembly, component of the Mediator complex.

The protein localises to the nucleus. In terms of biological role, component of the Mediator complex, a coactivator involved in the regulated transcription of nearly all RNA polymerase II-dependent genes. Mediator functions as a bridge to convey information from gene-specific regulatory proteins to the basal RNA polymerase II transcription machinery. Mediator is recruited to promoters by direct interactions with regulatory proteins and serves as a scaffold for the assembly of a functional preinitiation complex with RNA polymerase II and the general transcription factors. The chain is Mediator of RNA polymerase II transcription subunit 31-B (med31-b) from Xenopus laevis (African clawed frog).